Reading from the N-terminus, the 182-residue chain is MASSMLSTATVASINRVSPAQATMVAPFTGLKSTPVFPTTRKTNSDITSITSNGGKVQCMKVWPTLGMKKFETLSYLPPLTREQLASEVEYLLRSGWIPCLEFELEHGLVYREHARVPGYYDGRYWTMWKLPMFGCTDAAQVLKELDELIKHHPDGYARIIGFDNVRQVQCISFLAYKPPGA.

The N-terminal 58 residues, 1-58, are a transit peptide targeting the chloroplast; sequence MASSMLSTATVASINRVSPAQATMVAPFTGLKSTPVFPTTRKTNSDITSITSNGGKVQ.

This sequence belongs to the RuBisCO small chain family. In terms of assembly, heterohexadecamer of 8 large and 8 small subunits.

It localises to the plastid. The protein resides in the chloroplast. Its function is as follows. RuBisCO catalyzes two reactions: the carboxylation of D-ribulose 1,5-bisphosphate, the primary event in carbon dioxide fixation, as well as the oxidative fragmentation of the pentose substrate. Both reactions occur simultaneously and in competition at the same active site. Although the small subunit is not catalytic it is essential for maximal activity. The protein is Ribulose bisphosphate carboxylase small subunit, chloroplastic of Manihot esculenta (Cassava).